Consider the following 312-residue polypeptide: UPF0725 protein At3g19520 (312 aa).

This sequence belongs to the UPF0725 (EMB2204) family.

The chain is UPF0725 protein At3g19520 from Arabidopsis thaliana (Mouse-ear cress).